The primary structure comprises 563 residues: MDSLYKWFSTIYQGKDTCIDQDVFLSTEIQSIEIQPEEKPSEEKQPEEKSSEEKPKLQPVSAINSEKTQKPISSVALPNEDFNKLLYNFPSLSRRPQPKTTTERPQPKTTMDDKQVVVTFITERGRSCELSSERSRYRSPERSRYRSPERSRYRSPERSRYRSPERSRYRSPERSRYRSPERSHYRSPDRSHYRSHNKSTERSHYRSTERSRYRSPERSHYRSPEISRKRSRDESREKSLGRSRKMSRDESREKSLNESHKRSRDESQEKSYEPRPAKKLREKSPDEHQEKHQEKSPEKQVEITKPLEDYIALPKENVPDVFEIEKSQSTRYFSEKARIYFKNTHDGSIVWYKDDAIHRDGDLPAVIESDGTVKYYRDGKIHREGDKPAIIIPGKGKSWYLDGKLHRDGDEPAYVSNDGTLKWYRHGLLHRENDNPAIINLDGSMVWYVDGKLHRGGDLPAIIKPGICFKWYVNGHVHRDNDLPAIINIFKMPKLCNMYRIGDMVWYQHGQRHRSGGKPAIVTFRGVLFYFENGRRIYESPNGKEYYNMTANKLMMDFPYLLE.

The disordered stretch occupies residues 30–303 (QSIEIQPEEK…EKSPEKQVEI (274 aa)). Over residues 36-56 (PEEKPSEEKQPEEKSSEEKPK) the composition is skewed to basic and acidic residues. A compositionally biased stretch (polar residues) spans 61-72 (SAINSEKTQKPI). 3 stretches are compositionally biased toward basic and acidic residues: residues 101 to 115 (TTER…DDKQ), 123 to 276 (ERGR…EPRP), and 282 to 303 (EKSP…QVEI).

The protein belongs to the mimivirus L41 family.

This is an uncharacterized protein from Acanthamoeba polyphaga (Amoeba).